The primary structure comprises 231 residues: Chromosome partition protein MukE (231 aa).

The tract at residues 197-231 (RDGEAMPIEGGLSLDDSENDETSDNSAEGTGDEQP) is disordered.

It belongs to the MukE family. Interacts, and probably forms a ternary complex, with MukF and MukB. The complex formation is stimulated by calcium or magnesium.

It is found in the cytoplasm. The protein localises to the nucleoid. In terms of biological role, involved in chromosome condensation, segregation and cell cycle progression. May participate in facilitating chromosome segregation by condensation DNA from both sides of a centrally located replisome during cell division. Probably acts via its interaction with MukB and MukF. This Photorhabdus laumondii subsp. laumondii (strain DSM 15139 / CIP 105565 / TT01) (Photorhabdus luminescens subsp. laumondii) protein is Chromosome partition protein MukE.